Consider the following 131-residue polypeptide: Type IV wide pilus major component PilA4 (131 aa).

Residues 1 to 6 (MRNAKG) constitute a propeptide, leader sequence. Phe-7 carries the N-methylphenylalanine modification. A helical membrane pass occupies residues 7–27 (FTLIELLIVIAIIAILAAVLI). Cysteines 95 and 130 form a disulfide.

In terms of assembly, interacts with PilQ. In terms of processing, found in three forms of 14-kDa, 18-kDa and a glycosylated 23-kDa form. Both narrow and wide pili are glycosylated.

The protein localises to the cell inner membrane. It is found in the cell outer membrane. Its subcellular location is the periplasm. Its function is as follows. Plays an essential role in the assembly of two types of T4P pili: a wide and a narrow that participate in natural transformation and twitching motility. Major component of the wide pilus that is essential for natural transformation working as a DNA translocator structure that spans the inner and outer membranes. In addition, participates in the assembly of the narrow pilus composed of the PilA5 subunit that is required for twitching motility. The chain is Type IV wide pilus major component PilA4 (pilA4) from Thermus thermophilus (strain ATCC BAA-163 / DSM 7039 / HB27).